A 186-amino-acid polypeptide reads, in one-letter code: UPF0301 protein Swoo_1337 (186 aa).

It belongs to the UPF0301 (AlgH) family.

This Shewanella woodyi (strain ATCC 51908 / MS32) protein is UPF0301 protein Swoo_1337.